A 348-amino-acid polypeptide reads, in one-letter code: Phosphatidylglycerophosphate phosphatase 1, chloroplastic/mitochondrial (348 aa).

The N-terminal 58 residues, 1–58 (MQTPSMAASTTSYYPIPKSFLLSPPRHKRNPNLISCSTKPICSPPPPSSSSSSPLQTT), are a transit peptide targeting the chloroplast and mitochondrion. The tract at residues 17–67 (PKSFLLSPPRHKRNPNLISCSTKPICSPPPPSSSSSSPLQTTTTHRSQKQN) is disordered. The span at 55–67 (LQTTTTHRSQKQN) shows a compositional bias: polar residues. The short motif at 184 to 188 (DKDNT) is the Phosphoryl acceptor element.

This sequence belongs to the HAD-like hydrolase superfamily. The cofactor is Mg(2+). In terms of tissue distribution, mainly expressed in inflorescences (especially in pollen) and, to a lower extent, in leaves, stems and siliques, as well as, at low levels, in roots. Mostly expressed in hypocotyl, vasculatures, trichomes, guard cells and stigmas.

It is found in the plastid. The protein resides in the chloroplast. The protein localises to the mitochondrion. It catalyses the reaction a 1,2-diacyl-sn-glycero-3-phospho-(1'-sn-glycero-3'-phosphate) + H2O = a 1,2-diacyl-sn-glycero-3-phospho-(1'-sn-glycerol) + phosphate. It participates in phospholipid metabolism; phosphatidylglycerol biosynthesis; phosphatidylglycerol from CDP-diacylglycerol: step 2/2. In terms of biological role, phosphatidylglycerophosphate (PGP) phosphatase involved in the biosynthesis of phosphatidylglycerol (PG), a phosphoglycerolipid predominantly present in chloroplastic thylakoid membranes and which has important photosynthetic function; seems to use PGP 34:3, PGP 34:2 and PGP 34:1 as substrates. Required for thylakoid membranes development and chloroplast function. Necessary for normal cell growth. Required for root growth and columella cells organization. In Arabidopsis thaliana (Mouse-ear cress), this protein is Phosphatidylglycerophosphate phosphatase 1, chloroplastic/mitochondrial.